Reading from the N-terminus, the 157-residue chain is Protein Smg (157 aa).

This sequence belongs to the Smg family.

This Sodalis glossinidius (strain morsitans) protein is Protein Smg.